The chain runs to 196 residues: Glycerol-3-phosphate acyltransferase (196 aa).

A run of 5 helical transmembrane segments spans residues 1–21, 55–75, 81–101, 118–138, and 140–160; these read MIIF…SISG, IAIF…WLGT, PIYL…PIYF, AISI…VYLF, and YASL…WYIQ.

This sequence belongs to the PlsY family. As to quaternary structure, probably interacts with PlsX.

It localises to the cell inner membrane. It catalyses the reaction an acyl phosphate + sn-glycerol 3-phosphate = a 1-acyl-sn-glycero-3-phosphate + phosphate. It participates in lipid metabolism; phospholipid metabolism. Functionally, catalyzes the transfer of an acyl group from acyl-phosphate (acyl-PO(4)) to glycerol-3-phosphate (G3P) to form lysophosphatidic acid (LPA). This enzyme utilizes acyl-phosphate as fatty acyl donor, but not acyl-CoA or acyl-ACP. The polypeptide is Glycerol-3-phosphate acyltransferase (Blochmanniella floridana).